Consider the following 171-residue polypeptide: Co-chaperone protein HscB (171 aa).

The region spanning 2–74 (DYFTLFGLPA…LMRAEYLLSL (73 aa)) is the J domain.

It belongs to the HscB family. In terms of assembly, interacts with HscA and stimulates its ATPase activity. Interacts with IscU.

In terms of biological role, co-chaperone involved in the maturation of iron-sulfur cluster-containing proteins. Seems to help targeting proteins to be folded toward HscA. The sequence is that of Co-chaperone protein HscB from Shigella flexneri serotype 5b (strain 8401).